The chain runs to 82 residues: Protein costars (82 aa).

Belongs to the costars family.

In terms of biological role, modulates actin dynamics and cell motility. The polypeptide is Protein costars (cosA) (Dictyostelium discoideum (Social amoeba)).